Reading from the N-terminus, the 324-residue chain is Dermonecrotic toxin Hl-PLD1 (324 aa).

The N-terminal stretch at 1–35 (MAHCYYNSKRGCNRVMKTVALVVLISTVMVEESRG) is a signal peptide. Histidine 50 is an active-site residue. Glutamate 70 and aspartate 72 together coordinate Mg(2+). Histidine 86 (nucleophile) is an active-site residue. 2 disulfides stabilise this stretch: cysteine 90-cysteine 96 and cysteine 92-cysteine 236. Aspartate 130 serves as a coordination point for Mg(2+).

Belongs to the arthropod phospholipase D family. Class II subfamily. It depends on Mg(2+) as a cofactor. In terms of tissue distribution, expressed by the venom gland.

Its subcellular location is the secreted. It catalyses the reaction an N-(acyl)-sphingosylphosphocholine = an N-(acyl)-sphingosyl-1,3-cyclic phosphate + choline. The enzyme catalyses an N-(acyl)-sphingosylphosphoethanolamine = an N-(acyl)-sphingosyl-1,3-cyclic phosphate + ethanolamine. It carries out the reaction a 1-acyl-sn-glycero-3-phosphocholine = a 1-acyl-sn-glycero-2,3-cyclic phosphate + choline. The catalysed reaction is a 1-acyl-sn-glycero-3-phosphoethanolamine = a 1-acyl-sn-glycero-2,3-cyclic phosphate + ethanolamine. Its function is as follows. Dermonecrotic toxins cleave the phosphodiester linkage between the phosphate and headgroup of certain phospholipids (sphingolipid and lysolipid substrates), forming an alcohol (often choline) and a cyclic phosphate. This toxin acts on sphingomyelin (SM) with a high activity. It may also act on ceramide phosphoethanolamine (CPE), lysophosphatidylcholine (LPC) and lysophosphatidylethanolamine (LPE), but not on lysophosphatidylserine (LPS), and lysophosphatidylglycerol (LPG). It acts by transphosphatidylation, releasing exclusively cyclic phosphate products as second products. In vivo, shows dermonecrotic activity when intradermally injected into rabbit skin and is lethal to mice. Induces increased vascular permeability, edema, inflammatory response, and platelet aggregation. Does not show hemolytic activity (at up to 50 ug). This chain is Dermonecrotic toxin Hl-PLD1, found in Hemiscorpius lepturus (Scorpion).